The chain runs to 2248 residues: Zinc finger protein 407 (2248 aa).

Residues 1 to 32 are compositionally biased toward basic and acidic residues; sequence MMDSENKPENDEDEKINKEAQDLTKLSSHNED. Residues 1 to 84 are disordered; it reads MMDSENKPEN…RRKLDEAEPL (84 aa). 3 C2H2-type zinc fingers span residues 186–208, 215–238, and 244–268; these read LKCS…AESH, HTCC…KQAH, and FSCD…GKTH. Disordered stretches follow at residues 291–322 and 494–515; these read KKSR…GLRN and SETQ…GLHS. Residues 494–504 show a composition bias toward polar residues; sequence SETQEAEQGQG. C2H2-type zinc fingers lie at residues 528–551, 557–581, and 615–639; these read CACT…KRCH, FYCR…SNQH, and FLCT…TEKH. The disordered stretch occupies residues 667–700; that stretch reads ESENAKESMDDSGKASQEEPLKSRVSHGNEVRHS. The segment covering 669–699 has biased composition (basic and acidic residues); sequence ENAKESMDDSGKASQEEPLKSRVSHGNEVRH. Residues 705–728 form a C2H2-type 7 zinc finger; the sequence is FQCKKCFYKTRSSTVLTRHIKLRH. A disordered region spans residues 821-847; that stretch reads LSQSGGSTKDDELASTTTPKRGRPKGN. 2 consecutive C2H2-type zinc fingers follow at residues 850–873 and 879–903; these read RTCS…RRKH and YLCK…TKKH. Positions 910 to 962 are disordered; that stretch reads EASGKHSSDIIVGPEGGSLEAGKKNAGSAVTMSDEHANKPAESPTSVLEKPDR. 2 consecutive C2H2-type zinc fingers follow at residues 1017 to 1040 and 1046 to 1070; these read NKCL…KRKH and FYCM…TEKH. Ser-1262 carries the post-translational modification Phosphoserine. C2H2-type zinc fingers lie at residues 1444–1468 and 1486–1509; these read FHCL…SAGH and FKCV…KGQH. The C2H2-type 14; degenerate zinc-finger motif lies at 1537–1561; it reads NVCKYCGKMCRSSNSMAFLAHIRTH. C2H2-type zinc fingers lie at residues 1567–1589, 1595–1618, 1628–1650, 1656–1680, 1686–1708, 1714–1736, 1742–1767, and 1773–1796; these read FKCK…VKRH, YKCH…LGKH, FTCH…MKLH, FKCT…YRTH, FLCD…RRQH, FKCD…KRVH, YRCP…TGKH, and YNCP…KEQH.

The protein resides in the nucleus. In terms of biological role, may be involved in transcriptional regulation. The chain is Zinc finger protein 407 (ZNF407) from Homo sapiens (Human).